The sequence spans 862 residues: Leucine--tRNA ligase (862 aa).

The short motif at 49-59 (PYPSGRIHMGH) is the 'HIGH' region element. A 'KMSKS' region motif is present at residues 625–629 (KMSKS). Residue Lys628 participates in ATP binding.

The protein belongs to the class-I aminoacyl-tRNA synthetase family.

It localises to the cytoplasm. It carries out the reaction tRNA(Leu) + L-leucine + ATP = L-leucyl-tRNA(Leu) + AMP + diphosphate. The chain is Leucine--tRNA ligase from Paramagnetospirillum magneticum (strain ATCC 700264 / AMB-1) (Magnetospirillum magneticum).